The following is a 472-amino-acid chain: UDP-N-acetylmuramate--L-alanine ligase (472 aa).

118–124 contributes to the ATP binding site; the sequence is GTHGKTT.

The protein belongs to the MurCDEF family.

The protein resides in the cytoplasm. The enzyme catalyses UDP-N-acetyl-alpha-D-muramate + L-alanine + ATP = UDP-N-acetyl-alpha-D-muramoyl-L-alanine + ADP + phosphate + H(+). It functions in the pathway cell wall biogenesis; peptidoglycan biosynthesis. Functionally, cell wall formation. The protein is UDP-N-acetylmuramate--L-alanine ligase of Methylococcus capsulatus (strain ATCC 33009 / NCIMB 11132 / Bath).